We begin with the raw amino-acid sequence, 332 residues long: tRNA dimethylallyltransferase (332 aa).

Residue 14–21 (GPTASGKT) participates in ATP binding. 16–21 (TASGKT) lines the substrate pocket. The segment at 39-42 (DSMQ) is interaction with substrate tRNA. The interval 313-332 (KRSSKHDCKPQHPRSSTREL) is disordered. A compositionally biased stretch (basic and acidic residues) spans 317-332 (KHDCKPQHPRSSTREL).

It belongs to the IPP transferase family. Monomer. Mg(2+) is required as a cofactor.

It carries out the reaction adenosine(37) in tRNA + dimethylallyl diphosphate = N(6)-dimethylallyladenosine(37) in tRNA + diphosphate. Catalyzes the transfer of a dimethylallyl group onto the adenine at position 37 in tRNAs that read codons beginning with uridine, leading to the formation of N6-(dimethylallyl)adenosine (i(6)A). In Staphylococcus haemolyticus (strain JCSC1435), this protein is tRNA dimethylallyltransferase.